Here is a 117-residue protein sequence, read N- to C-terminus: MDLIKVVEQRFADLTQKAYPHFKSGDTITVAYRIKEGNKERIQQYRGVVIKMAGHGSSKRFTVRKMSENIGVERIFPINSPFIDNIVLNKIGKVRRSKLYYLRKLIGKKSRIKEKRI.

It belongs to the bacterial ribosomal protein bL19 family.

Its function is as follows. This protein is located at the 30S-50S ribosomal subunit interface and may play a role in the structure and function of the aminoacyl-tRNA binding site. The chain is Large ribosomal subunit protein bL19 from Azobacteroides pseudotrichonymphae genomovar. CFP2.